A 197-amino-acid chain; its full sequence is TLE family member 5 (197 aa).

The segment at L166 to D197 is CCN domain. Residues G170–D197 are disordered. Residues L175–D197 show a composition bias toward basic and acidic residues. A Phosphoserine modification is found at S196.

The protein belongs to the WD repeat Groucho/TLE family. As to quaternary structure, homooligomer and heterooligomer with other family members. Binds TCF7 and the NF-kappa-B subunit RELA. Interacts with PHF12. Interacts (via Q domain) with SIX3. Interacts with SIX6. In terms of processing, ubiquitinated by XIAP/BIRC4. As to expression, ubiquitously expressed in developing embryos by midgestation, a wide expression is conserved in adult. In mouse, abundantly expressed in muscle, heart and brain.

It is found in the nucleus. Functionally, transcriptional corepressor. Acts as a dominant repressor towards other family members. Inhibits NF-kappa-B-regulated gene expression. May be required for the initiation and maintenance of the differentiated state. Essential for the transcriptional repressor activity of SIX3 during retina and lens development. This Mus musculus (Mouse) protein is TLE family member 5.